We begin with the raw amino-acid sequence, 1144 residues long: PAN2-PAN3 deadenylation complex catalytic subunit PAN2 (1144 aa).

4 WD repeats span residues 27–66 (KKEK…YTRH), 153–193 (SSTY…VIHS), 196–233 (GHSA…NVYD), and 302–341 (HPCK…SGFT). A linker region spans residues 344–481 (AAVLEYQDYP…LLEYKPSNNI (138 aa)). The 406-residue stretch at 482-887 (DIPPAYSKLQ…TPEIVVYSDA (406 aa)) folds into the USP domain. Residues 939–1110 (VALDAEFVSL…EDAHTALLLY (172 aa)) form the Exonuclease domain. A divalent metal cation is bound by residues D942, E944, D1051, and D1102.

This sequence belongs to the peptidase C19 family. PAN2 subfamily. In terms of assembly, forms a heterotrimer with an asymmetric homodimer of the regulatory subunit PAN3 to form the poly(A)-nuclease (PAN) deadenylation complex. A divalent metal cation is required as a cofactor.

Its subcellular location is the cytoplasm. The enzyme catalyses Exonucleolytic cleavage of poly(A) to 5'-AMP.. Its activity is regulated as follows. Positively regulated by the regulatory subunit PAN3. Functionally, catalytic subunit of the poly(A)-nuclease (PAN) deadenylation complex, one of two cytoplasmic mRNA deadenylases involved in mRNA turnover. PAN specifically shortens poly(A) tails of RNA and the activity is stimulated by poly(A)-binding protein PAB1. PAN deadenylation is followed by rapid degradation of the shortened mRNA tails by the CCR4-NOT complex. Deadenylated mRNAs are then degraded by two alternative mechanisms, namely exosome-mediated 3'-5' exonucleolytic degradation, or deadenylation-dependent mRNA decaping and subsequent 5'-3' exonucleolytic degradation by XRN1. May also be involved in post-transcriptional maturation of mRNA poly(A) tails. This Kluyveromyces lactis (strain ATCC 8585 / CBS 2359 / DSM 70799 / NBRC 1267 / NRRL Y-1140 / WM37) (Yeast) protein is PAN2-PAN3 deadenylation complex catalytic subunit PAN2.